A 219-amino-acid chain; its full sequence is Leucyl/phenylalanyl-tRNA--protein transferase (219 aa).

The protein belongs to the L/F-transferase family.

It localises to the cytoplasm. It carries out the reaction N-terminal L-lysyl-[protein] + L-leucyl-tRNA(Leu) = N-terminal L-leucyl-L-lysyl-[protein] + tRNA(Leu) + H(+). The enzyme catalyses N-terminal L-arginyl-[protein] + L-leucyl-tRNA(Leu) = N-terminal L-leucyl-L-arginyl-[protein] + tRNA(Leu) + H(+). The catalysed reaction is L-phenylalanyl-tRNA(Phe) + an N-terminal L-alpha-aminoacyl-[protein] = an N-terminal L-phenylalanyl-L-alpha-aminoacyl-[protein] + tRNA(Phe). Functionally, functions in the N-end rule pathway of protein degradation where it conjugates Leu, Phe and, less efficiently, Met from aminoacyl-tRNAs to the N-termini of proteins containing an N-terminal arginine or lysine. The sequence is that of Leucyl/phenylalanyl-tRNA--protein transferase from Leptospira interrogans serogroup Icterohaemorrhagiae serovar copenhageni (strain Fiocruz L1-130).